The primary structure comprises 320 residues: NAC domain-containing protein 18 (320 aa).

Positions 1–22 (MESTDSSGGPPPPQPNLPPGFR) are disordered. Pro residues predominate over residues 9–18 (GPPPPQPNLP). Residues 17-177 (LPPGFRFHPT…DWVLCRIYKK (161 aa)) form the NAC domain. Residues 118–183 (VGVKKALVFY…IYKKNNSTAS (66 aa)) mediate DNA binding.

In terms of tissue distribution, restricted primarily to the region of the embryo including the SAM. Expressed in the outer integument, but seems not expressed in the embryo at the torpedo stage.

It localises to the nucleus. May encode a transcription factor involved in the elaboration of shoot apical meristems (SAM). Together with NAC056/NARS1, regulates embryogenesis by regulating the development and degeneration of ovule integuments, a process required for intertissue communication between the embryo and the maternal integument. The sequence is that of NAC domain-containing protein 18 (NAC018) from Arabidopsis thaliana (Mouse-ear cress).